A 380-amino-acid polypeptide reads, in one-letter code: Cytochrome b (380 aa).

4 helical membrane passes run 33–53 (FGSL…FLAM), 77–98 (WLIR…FIHV), 113–133 (WNIG…GYVL), and 178–198 (FFAF…VHLL). Residues His-83 and His-97 each coordinate heme b. Positions 182 and 196 each coordinate heme b. His-201 contacts a ubiquinone. The next 4 helical transmembrane spans lie at 226-246 (IKDL…VLFF), 288-308 (LGGV…PLLN), 320-340 (ITQV…XXXX), and 347-367 (XXXX…IFMP).

It belongs to the cytochrome b family. The cytochrome bc1 complex contains 11 subunits: 3 respiratory subunits (MT-CYB, CYC1 and UQCRFS1), 2 core proteins (UQCRC1 and UQCRC2) and 6 low-molecular weight proteins (UQCRH/QCR6, UQCRB/QCR7, UQCRQ/QCR8, UQCR10/QCR9, UQCR11/QCR10 and a cleavage product of UQCRFS1). This cytochrome bc1 complex then forms a dimer. Heme b serves as cofactor.

It localises to the mitochondrion inner membrane. Component of the ubiquinol-cytochrome c reductase complex (complex III or cytochrome b-c1 complex) that is part of the mitochondrial respiratory chain. The b-c1 complex mediates electron transfer from ubiquinol to cytochrome c. Contributes to the generation of a proton gradient across the mitochondrial membrane that is then used for ATP synthesis. The chain is Cytochrome b (MT-CYB) from Rhipidomys leucodactylus (White-footed climbing mouse).